We begin with the raw amino-acid sequence, 172 residues long: Centrin-1 (172 aa).

Residues 1–31 (MASGFKKPSAASTGQKRKVAPKPELTEDQKQ) form a disordered region. EF-hand domains lie at 28–63 (DQKQEVREAFDLFDVDGSGTIDAKELKVAMRALGFE), 64–99 (PRKEEMKKMISEVDREGTGKISFNDFLAVMTQKMSE), 101–136 (DTKEEILKAFRLFDDDETGKISFKNLKRVANELGEN), and 137–172 (LTDEELQEMIDEADRDGDGEVNEEEFLRIMKKTSLY). Ca(2+) is bound by residues Asp41, Asp43, Ser45, Thr47, and Glu52. Positions 150, 152, 154, 156, and 161 each coordinate Ca(2+).

Belongs to the centrin family. Monomer. Interacts with CIMAP3. Interacts with USP49.

The protein localises to the cytoplasm. It is found in the cytoskeleton. Its subcellular location is the microtubule organizing center. It localises to the centrosome. The protein resides in the cell projection. The protein localises to the cilium. Functionally, plays a fundamental role in microtubule-organizing center structure and function. Plays a role in sperm cilia formation. The protein is Centrin-1 of Homo sapiens (Human).